A 412-amino-acid chain; its full sequence is Motilin receptor (412 aa).

Residues Met1 to Leu35 are Extracellular-facing. Asn6 carries N-linked (GlcNAc...) asparagine glycosylation. The helical transmembrane segment at Gly36–Asn56 threads the bilayer. The Cytoplasmic segment spans residues Val57 to Asn74. The chain crosses the membrane as a helical span at residues Leu75–Asp94. At Leu95 to Arg112 the chain is on the extracellular side. Cysteines 111 and 235 form a disulfide. A helical membrane pass occupies residues Leu113 to Val134. The Cytoplasmic segment spans residues Glu135–Ala157. The chain crosses the membrane as a helical span at residues Leu158–Gly178. The Extracellular portion of the chain corresponds to Val179–Arg246. The N-linked (GlcNAc...) asparagine glycan is linked to Asn192. The helical transmembrane segment at Val247–Ile270 threads the bilayer. The Cytoplasmic portion of the chain corresponds to Gly271–Arg298. Residues Val299–Ile320 form a helical membrane-spanning segment. Residues Tyr321–Gln334 are Extracellular-facing. Residues Tyr335–Ile358 form a helical membrane-spanning segment. At Ser359–Gly412 the chain is on the cytoplasmic side.

The protein belongs to the G-protein coupled receptor 1 family. Expressed only in thyroid, stomach, and bone marrow.

It is found in the cell membrane. Receptor for motilin. The sequence is that of Motilin receptor (MLNR) from Homo sapiens (Human).